Consider the following 131-residue polypeptide: Profilin-3 (131 aa).

This sequence belongs to the profilin family. In terms of assembly, occurs in many kinds of cells as a complex with monomeric actin in a 1:1 ratio.

Its subcellular location is the cytoplasm. It localises to the cytoskeleton. Its function is as follows. Binds to actin and affects the structure of the cytoskeleton. At high concentrations, profilin prevents the polymerization of actin, whereas it enhances it at low concentrations. By binding to PIP2, it inhibits the formation of IP3 and DG. In Lilium longiflorum (Trumpet lily), this protein is Profilin-3.